A 239-amino-acid polypeptide reads, in one-letter code: Probable transcriptional regulatory protein BT9727_0453 (239 aa).

This sequence belongs to the TACO1 family. YeeN subfamily.

It is found in the cytoplasm. The protein is Probable transcriptional regulatory protein BT9727_0453 of Bacillus thuringiensis subsp. konkukian (strain 97-27).